The chain runs to 332 residues: Glycerol-3-phosphate dehydrogenase [NAD(P)+] (332 aa).

Tryptophan 11, arginine 30, and lysine 108 together coordinate NADPH. Positions 108, 137, and 139 each coordinate sn-glycerol 3-phosphate. Alanine 141 contributes to the NADPH binding site. Sn-glycerol 3-phosphate contacts are provided by lysine 192, aspartate 245, serine 255, arginine 256, and asparagine 257. Catalysis depends on lysine 192, which acts as the Proton acceptor. An NADPH-binding site is contributed by arginine 256. Residues valine 280 and glutamate 282 each contribute to the NADPH site.

Belongs to the NAD-dependent glycerol-3-phosphate dehydrogenase family.

The protein localises to the cytoplasm. It catalyses the reaction sn-glycerol 3-phosphate + NAD(+) = dihydroxyacetone phosphate + NADH + H(+). The enzyme catalyses sn-glycerol 3-phosphate + NADP(+) = dihydroxyacetone phosphate + NADPH + H(+). It functions in the pathway membrane lipid metabolism; glycerophospholipid metabolism. Catalyzes the reduction of the glycolytic intermediate dihydroxyacetone phosphate (DHAP) to sn-glycerol 3-phosphate (G3P), the key precursor for phospholipid synthesis. This is Glycerol-3-phosphate dehydrogenase [NAD(P)+] from Burkholderia orbicola (strain MC0-3).